A 658-amino-acid polypeptide reads, in one-letter code: Glycogen debranching enzyme (658 aa).

Aspartate 335 (nucleophile) is an active-site residue. Glutamate 370 serves as the catalytic Proton donor.

It belongs to the glycosyl hydrolase 13 family.

The catalysed reaction is Hydrolysis of (1-&gt;6)-alpha-D-glucosidic linkages to branches with degrees of polymerization of three or four glucose residues in limit dextrin.. It functions in the pathway glycan degradation; glycogen degradation. Functionally, removes maltotriose and maltotetraose chains that are attached by 1,6-alpha-linkage to the limit dextrin main chain, generating a debranched limit dextrin. In Erwinia tasmaniensis (strain DSM 17950 / CFBP 7177 / CIP 109463 / NCPPB 4357 / Et1/99), this protein is Glycogen debranching enzyme.